The primary structure comprises 383 residues: Deoxyguanosinetriphosphate triphosphohydrolase-like protein (383 aa).

The HD domain occupies 62 to 198 (RLTHSLEVST…AALADDISYI (137 aa)).

The protein belongs to the dGTPase family. Type 2 subfamily.

The sequence is that of Deoxyguanosinetriphosphate triphosphohydrolase-like protein from Rickettsia felis (strain ATCC VR-1525 / URRWXCal2) (Rickettsia azadi).